The sequence spans 458 residues: A-type ATP synthase subunit B (458 aa).

This sequence belongs to the ATPase alpha/beta chains family. In terms of assembly, has multiple subunits with at least A(3), B(3), C, D, E, F, H, I and proteolipid K(x).

It localises to the cell membrane. Component of the A-type ATP synthase that produces ATP from ADP in the presence of a proton gradient across the membrane. The B chain is a regulatory subunit. In Methanocella arvoryzae (strain DSM 22066 / NBRC 105507 / MRE50), this protein is A-type ATP synthase subunit B.